The chain runs to 199 residues: Tumor necrosis factor ligand superfamily member 4 (199 aa).

The Cytoplasmic segment spans residues 1-25 (MEGEGVQPPDENLENGSRPRFKWKK). The chain crosses the membrane as a helical; Signal-anchor for type II membrane protein span at residues 26–48 (VLRLVVSGIKAAGLLLCVVYVCL). Topologically, residues 49-199 (QFSSSPAKDS…YSSTVNQVPL (151 aa)) are extracellular. The 118-residue stretch at 59–176 (PIQRLRAPVT…QINDGELIIV (118 aa)) folds into the THD domain. Intrachain disulfides connect C70-C163 and C98-C184. Residues N91 and N157 are each glycosylated (N-linked (GlcNAc...) asparagine).

This sequence belongs to the tumor necrosis factor family. Homotrimer. Detected in T-cell lines, but not in a macrophage cell line.

The protein resides in the membrane. In terms of biological role, cytokine that binds to TNFRSF4. Co-stimulates T-cell proliferation and cytokine production. In Rattus norvegicus (Rat), this protein is Tumor necrosis factor ligand superfamily member 4 (Tnfsf4).